Consider the following 162-residue polypeptide: FCS-Like Zinc finger 6 (162 aa).

2 disordered regions span residues Asn-25 to Asn-47 and Arg-121 to Val-162. Positions Pro-27–Asn-47 are enriched in polar residues. An FLZ-type zinc finger spans residues His-88 to Glu-132. Over residues Ala-147–Val-162 the composition is skewed to low complexity.

The protein belongs to the FLZ family. In terms of assembly, interacts with KIN10 and KIN11 via its FLZ-type zinc finger domain. Early expressed in hypocotyl and cotyledon. Later expressed in old or senescing leaves and in pistil, pollen and filament of open flowers.

Its subcellular location is the nucleus. The protein localises to the cytoplasm. The protein resides in the endoplasmic reticulum. Its function is as follows. May act as an adapter to facilitate the interaction of SnRK1 complex with effector proteins, conferring tissue- and stimulus-type specific differences in the SnRK1 regulation pathway. Negatively regulates KIN10 leading to a repression of the SnRK1 signaling pathway. This chain is FCS-Like Zinc finger 6, found in Arabidopsis thaliana (Mouse-ear cress).